Here is a 281-residue protein sequence, read N- to C-terminus: Arabinose operon regulatory protein (281 aa).

The alpha-L-arabinopyanose site is built by P8, T24, R38, Y82, and H93. In terms of domain architecture, HTH araC/xylS-type spans 180-279; it reads RDACQYISDH…GASPSEFRAG (100 aa). 2 consecutive DNA-binding regions (H-T-H motif) follow at residues 198-219 and 246-269; these read ASVAQHVCLSPSRLSHLFRQQL and IATVGRNVGFDDQLYFSRVFKKCT.

As to quaternary structure, homodimer.

It is found in the cytoplasm. Its function is as follows. Transcription factor that regulates the expression of several genes involved in the transport and metabolism of L-arabinose. The protein is Arabinose operon regulatory protein of Salmonella typhimurium (strain LT2 / SGSC1412 / ATCC 700720).